The chain runs to 101 residues: Protein Tat (101 aa).

The tract at residues 1–20 (MEPVDPNLEPWKHPGSQPTT) is disordered. The segment at 1 to 24 (MEPVDPNLEPWKHPGSQPTTACSN) is interaction with human CREBBP. The transactivation stretch occupies residues 1-48 (MEPVDPNLEPWKHPGSQPTTACSNCYCKVCCWHCQLCFLKKGLGISYG). The Zn(2+) site is built by Cys22, Cys25, and Cys27. Residues 22–37 (CSNCYCKVCCWHCQLC) form a cysteine-rich region. Position 28 is an N6-acetyllysine; by host PCAF (Lys28). Cys30, His33, Cys34, and Cys37 together coordinate Zn(2+). Positions 38–48 (FLKKGLGISYG) are core. The tract at residues 48–101 (GKKKRKPRRGPPQGSKDHQTLIPKQPLPQSQRVSAGQEESKKKVESKAKTDRFA) is disordered. The Nuclear localization signal, RNA-binding (TAR), and protein transduction signature appears at 49–57 (KKKRKPRRG). Residues 49–86 (KKKRKPRRGPPQGSKDHQTLIPKQPLPQSQRVSAGQEE) are interaction with the host capping enzyme RNGTT. N6-acetyllysine; by host EP300 and GCN5L2 occurs at positions 50 and 51. Position 52 is an asymmetric dimethylarginine; by host PRMT6 (Arg52). A Glycyl lysine isopeptide (Lys-Gly) (interchain with G-Cter in ubiquitin) cross-link involves residue Lys71. A compositionally biased stretch (basic and acidic residues) spans 85–101 (EESKKKVESKAKTDRFA).

It belongs to the lentiviruses Tat family. Interacts with host CCNT1. Associates with the P-TEFb complex composed at least of Tat, P-TEFb (CDK9 and CCNT1), TAR RNA, RNA Pol II. Recruits the HATs CREBBP, TAF1/TFIID, EP300, PCAF and GCN5L2. Interacts with host KAT5/Tip60; this interaction targets the latter to degradation. Interacts with the host deacetylase SIRT1. Interacts with host capping enzyme RNGTT; this interaction stimulates RNGTT. Binds to host KDR, and to the host integrins ITGAV/ITGB3 and ITGA5/ITGB1. Interacts with host KPNB1/importin beta-1 without previous binding to KPNA1/importin alpha-1. Interacts with EIF2AK2. Interacts with host nucleosome assembly protein NAP1L1; this interaction may be required for the transport of Tat within the nucleus, since the two proteins interact at the nuclear rim. Interacts with host C1QBP/SF2P32; this interaction involves lysine-acetylated Tat. Interacts with the host chemokine receptors CCR2, CCR3 and CXCR4. Interacts with host DPP4/CD26; this interaction may trigger an anti-proliferative effect. Interacts with host LDLR. Interacts with the host extracellular matrix metalloproteinase MMP1. Interacts with host PRMT6; this interaction mediates Tat's methylation. Interacts with, and is ubiquitinated by MDM2/Hdm2. Interacts with host PSMC3 and HTATIP2. Interacts with STAB1; this interaction may overcome SATB1-mediated repression of IL2 and IL2RA (interleukin) in T cells by binding to the same domain than HDAC1. Interacts (when acetylated) with human CDK13, thereby increasing HIV-1 mRNA splicing and promoting the production of the doubly spliced HIV-1 protein Nef. Interacts with host TBP; this interaction modulates the activity of transcriptional pre-initiation complex. Interacts with host RELA. Interacts with host PLSCR1; this interaction negatively regulates Tat transactivation activity by altering its subcellular distribution. Post-translationally, asymmetrical arginine methylation by host PRMT6 seems to diminish the transactivation capacity of Tat and affects the interaction with host CCNT1. Acetylation by EP300, CREBBP, GCN5L2/GCN5 and PCAF regulates the transactivation activity of Tat. EP300-mediated acetylation of Lys-50 promotes dissociation of Tat from the TAR RNA through the competitive binding to PCAF's bromodomain. In addition, the non-acetylated Tat's N-terminus can also interact with PCAF. PCAF-mediated acetylation of Lys-28 enhances Tat's binding to CCNT1. Lys-50 is deacetylated by SIRT1. In terms of processing, polyubiquitination by host MDM2 does not target Tat to degradation, but activates its transactivation function and fosters interaction with CCNT1 and TAR RNA. Post-translationally, phosphorylated by EIF2AK2 on serine and threonine residues adjacent to the basic region important for TAR RNA binding and function. Phosphorylation of Tat by EIF2AK2 is dependent on the prior activation of EIF2AK2 by dsRNA.

It localises to the host nucleus. The protein localises to the host nucleolus. The protein resides in the host cytoplasm. It is found in the secreted. Functionally, transcriptional activator that increases RNA Pol II processivity, thereby increasing the level of full-length viral transcripts. Recognizes a hairpin structure at the 5'-LTR of the nascent viral mRNAs referred to as the transactivation responsive RNA element (TAR) and recruits the cyclin T1-CDK9 complex (P-TEFb complex) that will in turn hyperphosphorylate the RNA polymerase II to allow efficient elongation. The CDK9 component of P-TEFb and other Tat-activated kinases hyperphosphorylate the C-terminus of RNA Pol II that becomes stabilized and much more processive. Other factors such as HTATSF1/Tat-SF1, SUPT5H/SPT5, and HTATIP2 are also important for Tat's function. Besides its effect on RNA Pol II processivity, Tat induces chromatin remodeling of proviral genes by recruiting the histone acetyltransferases (HATs) CREBBP, EP300 and PCAF to the chromatin. This also contributes to the increase in proviral transcription rate, especially when the provirus integrates in transcriptionally silent region of the host genome. To ensure maximal activation of the LTR, Tat mediates nuclear translocation of NF-kappa-B by interacting with host RELA. Through its interaction with host TBP, Tat may also modulate transcription initiation. Tat can reactivate a latently infected cell by penetrating in it and transactivating its LTR promoter. In the cytoplasm, Tat is thought to act as a translational activator of HIV-1 mRNAs. Its function is as follows. Extracellular circulating Tat can be endocytosed by surrounding uninfected cells via the binding to several surface receptors such as CD26, CXCR4, heparan sulfate proteoglycans (HSPG) or LDLR. Neurons are rarely infected, but they internalize Tat via their LDLR. Through its interaction with nuclear HATs, Tat is potentially able to control the acetylation-dependent cellular gene expression. Modulates the expression of many cellular genes involved in cell survival, proliferation or in coding for cytokines or cytokine receptors. Tat plays a role in T-cell and neurons apoptosis. Tat induced neurotoxicity and apoptosis probably contribute to neuroAIDS. Circulating Tat also acts as a chemokine-like and/or growth factor-like molecule that binds to specific receptors on the surface of the cells, affecting many cellular pathways. In the vascular system, Tat binds to ITGAV/ITGB3 and ITGA5/ITGB1 integrins dimers at the surface of endothelial cells and competes with bFGF for heparin-binding sites, leading to an excess of soluble bFGF. The protein is Protein Tat of Human immunodeficiency virus type 1 group M subtype A (isolate U455) (HIV-1).